Consider the following 130-residue polypeptide: uncharacterized protein (130 aa).

A helical membrane pass occupies residues 8–28; that stretch reads PFILMIIVLGLFLVSIGGYYY.

The protein resides in the membrane. This is an uncharacterized protein from Bacillus anthracis.